We begin with the raw amino-acid sequence, 523 residues long: Putative UDP-glucuronosyltransferase ugt-50 (523 aa).

The first 25 residues, 1 to 25, serve as a signal peptide directing secretion; sequence MHYSQMRWMFFCLTALLHGSFIVNA. Residues Asn-84, Asn-248, Asn-283, and Asn-487 are each glycosylated (N-linked (GlcNAc...) asparagine). The chain crosses the membrane as a helical span at residues 490 to 508; it reads IIEHNHLDLFFYLCIISLL.

Belongs to the UDP-glycosyltransferase family.

It is found in the membrane. It carries out the reaction glucuronate acceptor + UDP-alpha-D-glucuronate = acceptor beta-D-glucuronoside + UDP + H(+). This is Putative UDP-glucuronosyltransferase ugt-50 (ugt-50) from Caenorhabditis elegans.